A 210-amino-acid polypeptide reads, in one-letter code: ATP-dependent Clp protease proteolytic subunit (210 aa).

Catalysis depends on Ser-111, which acts as the Nucleophile. His-136 is an active-site residue.

It belongs to the peptidase S14 family. As to quaternary structure, fourteen ClpP subunits assemble into 2 heptameric rings which stack back to back to give a disk-like structure with a central cavity, resembling the structure of eukaryotic proteasomes.

It localises to the cytoplasm. It carries out the reaction Hydrolysis of proteins to small peptides in the presence of ATP and magnesium. alpha-casein is the usual test substrate. In the absence of ATP, only oligopeptides shorter than five residues are hydrolyzed (such as succinyl-Leu-Tyr-|-NHMec, and Leu-Tyr-Leu-|-Tyr-Trp, in which cleavage of the -Tyr-|-Leu- and -Tyr-|-Trp bonds also occurs).. Functionally, cleaves peptides in various proteins in a process that requires ATP hydrolysis. Has a chymotrypsin-like activity. Plays a major role in the degradation of misfolded proteins. The chain is ATP-dependent Clp protease proteolytic subunit from Halorhodospira halophila (strain DSM 244 / SL1) (Ectothiorhodospira halophila (strain DSM 244 / SL1)).